Reading from the N-terminus, the 2896-residue chain is Protein PRRC2C (2896 aa).

Lys27 bears the N6-acetyllysine mark. The segment at 28–212 is disordered; the sequence is GKSLETQKTT…STAGTSEQND (185 aa). Residues 88-97 are compositionally biased toward basic and acidic residues; it reads QEQHEEEKTP. Positions 105–119 are enriched in low complexity; that stretch reads KPGVAAPPEVAPAPK. Polar residues predominate over residues 134-144; that stretch reads QVNSQFQQEFP. Residues 151–160 are compositionally biased toward basic and acidic residues; that stretch reads DQEKKEKETN. Phosphoserine occurs at positions 187 and 191. Residues 201–211 show a composition bias toward polar residues; that stretch reads DESTAGTSEQN. Residue Arg242 is modified to Asymmetric dimethylarginine; alternate. Omega-N-methylarginine; alternate is present on Arg242. Asymmetric dimethylarginine occurs at positions 255 and 266. Disordered regions lie at residues 264–729 and 750–788; these read PMRF…QHLA and SGRPAMDIPPIHPGMIPPKPLMRRDQMEGSPNSSESFEH. An omega-N-methylarginine mark is found at Arg279 and Arg281. Residues 301 to 310 show a composition bias toward basic and acidic residues; it reads ELKELDKFDN. Ser335 carries the phosphoserine modification. Over residues 341–358 the composition is skewed to polar residues; it reads GSNSPKENNSEDQGSKAS. Basic and acidic residues predominate over residues 359-368; it reads ENNENKKETD. Residues 370-381 show a composition bias toward polar residues; it reads VSNTKSSSQIPA. Lys392 bears the N6-acetyllysine mark. Phosphoserine is present on residues Ser395 and Ser500. Polar residues predominate over residues 395 to 405; the sequence is SFNQERGTSSH. A compositionally biased stretch (basic and acidic residues) spans 465-648; that stretch reads RREEEERRME…EATPVVHETE (184 aa). Residues 676 to 708 are compositionally biased toward low complexity; that stretch reads QRQQEQMKQQQWQQQQQQGVLPQTVPSQPSSST. A compositionally biased stretch (pro residues) spans 759-769; the sequence is PIHPGMIPPKP. Phosphoserine is present on residues Ser779, Ser785, and Ser801. Residues 804–1118 form a disordered region; the sequence is RMLWGSDPYP…PVSTVQVEPA (315 aa). 3 stretches are compositionally biased toward basic and acidic residues: residues 825-836, 852-867, and 878-888; these read ATEEPEDVRSEA, NQLEAHPKADFIRESS, and SVEDVRPHHTD. Phosphoserine occurs at positions 867, 878, 920, and 929. Basic and acidic residues-rich tracts occupy residues 954–993, 1000–1010, and 1020–1058; these read IDSKEPIERPEEKPKKEGFIRSSEGPKPEKVYKSKSETRW, NRREEVNDRPV, and VLRDMKEEREQRKEKEGEKAEKVTEKVVVKPEKTEKKDL. Residues 1020–1046 adopt a coiled-coil conformation; it reads VLRDMKEEREQRKEKEGEKAEKVTEKV. The span at 1059 to 1081 shows a compositional bias: pro residues; sequence PPPPPPPQPPAPIQPQSVPPPIQ. A compositionally biased stretch (polar residues) spans 1089 to 1100; the sequence is STETATLAQKPS. Lys1133 is covalently cross-linked (Glycyl lysine isopeptide (Lys-Gly) (interchain with G-Cter in SUMO2)). 4 stretches are compositionally biased toward basic and acidic residues: residues 1143 to 1163, 1170 to 1180, 1214 to 1230, and 1237 to 1248; these read SKDLVIERPRPDSRPAVKKES, YWKEARERDWF, HTRDYPQYRDNKPRAEH, and RQREESETRSES. Disordered regions lie at residues 1143-1647, 1670-1785, 1905-1991, 2005-2164, 2218-2238, 2257-2290, 2317-2341, and 2668-2701; these read SKDL…DALS, EDPQ…SAPV, APAS…TAEL, ISKK…VSEM, LPNTLPLPKRETIQQSSSLTS, WENSPNVREKGSPVTSTAPPIATGVSSSASGPST, GAGTYTTSSLSTKSTTTSDPPNICK, and DIKPGTPPIAGRSTTPTSSPFRATSTSPNSQSSK. 5 positions are modified to phosphoserine: Ser1242, Ser1246, Ser1248, Ser1249, and Ser1263. Composition is skewed to basic and acidic residues over residues 1261–1297, 1305–1330, 1381–1418, and 1429–1446; these read RGSETDTDSEIHESASDKDSLSKGKLPKREERPENKK, FKPDNHVRIDNRLLEKPYVRDDDKAK, EVPKPEDGEPPRRHEQFIPIAADKRPPKFERKFDPARE, and PRQDKPPRFRRLREREAA. 2 positions are modified to phosphothreonine: Thr1265 and Thr1267. 2 stretches are compositionally biased toward polar residues: residues 1457–1469 and 1477–1491; these read TNGTVNNVAQEPV and GNKTPDLSNQNSSDQ. Residues 1505-1517 show a composition bias toward basic and acidic residues; it reads FNERRERDEKKNA. A Phosphoserine modification is found at Ser1544. Basic and acidic residues-rich tracts occupy residues 1620 to 1634 and 1692 to 1704; these read NSKDSTGKKREDPKP and RLQDEERRKKEEQ. Positions 1682–1717 form a coiled coil; it reads TEVVSKKQQKRLQDEERRKKEEQVIQVWNKKNANEK. Residues 1742–1785 show a composition bias toward low complexity; the sequence is SSASVPPLASAPLPPSTSASVPASTSAPLPATLTPVPASTSAPV. Residues 1913–1929 are compositionally biased toward pro residues; sequence APAPTPVSAPNPAPPAP. Residues 1943 to 1952 show a composition bias toward low complexity; that stretch reads PLQTTSQSSK. Thr1965 is subject to Phosphothreonine. The segment covering 1976–1986 has biased composition (polar residues); it reads KSIQTPQSHGT. A phosphoserine mark is found at Ser1983 and Ser2013. Positions 2019 to 2035 are enriched in polar residues; it reads SVSAWNKPLTSFGSAPS. Positions 2075 to 2088 are enriched in basic and acidic residues; it reads KSADKIPEPKEQRQ. Ser2105 is subject to Phosphoserine. Positions 2108 to 2132 are enriched in basic and acidic residues; it reads ENKEHKPGPIGKERSLKNRKVKDAQ. Ser2143 carries the phosphoserine modification. Positions 2257-2267 are enriched in basic and acidic residues; that stretch reads WENSPNVREKG. At Ser2260 the chain carries Phosphoserine. The span at 2269–2290 shows a compositional bias: polar residues; the sequence is PVTSTAPPIATGVSSSASGPST. Low complexity predominate over residues 2320 to 2334; that stretch reads TYTTSSLSTKSTTTS. Phosphothreonine is present on residues Thr2673 and Thr2682. A compositionally biased stretch (polar residues) spans 2679–2701; that stretch reads RSTTPTSSPFRATSTSPNSQSSK. Ser2686 and Ser2694 each carry phosphoserine. The residue at position 2814 (Arg2814) is an Omega-N-methylarginine. Arg2823 carries the asymmetric dimethylarginine; alternate modification. At Arg2823 the chain carries Omega-N-methylarginine; alternate. Over residues 2824 to 2833 the composition is skewed to polar residues; it reads FFSEQQQSKQ. Positions 2824-2896 are disordered; the sequence is FFSEQQQSKQ…QAIKTEETKS (73 aa).

Overexpressed in bladder cancer.

Its subcellular location is the cytoplasm. It localises to the stress granule. Functionally, required for efficient formation of stress granules. The sequence is that of Protein PRRC2C from Homo sapiens (Human).